Reading from the N-terminus, the 348-residue chain is Ileal sodium/bile acid cotransporter (348 aa).

Topologically, residues 1-28 are extracellular; that stretch reads MDNSSICNPNATICEGDSCIAPESNFNA. N-linked (GlcNAc...) asparagine glycans are attached at residues Asn-3 and Asn-10. The helical transmembrane segment at 29–49 threads the bilayer; sequence ILSVVMSTVLTILLALVMFSM. Over 50-81 the chain is Cytoplasmic; the sequence is GCNVELHKFLGHLRRPWGIVVGFLCQFGIMPL. A helical membrane pass occupies residues 82–102; it reads TGFVLSVAFGILPVQAVVVLI. The Extracellular portion of the chain corresponds to 103–126; it reads QGCCPGGTASNILAYWVDGDMDLS. Residues 127–147 form a helical membrane-spanning segment; that stretch reads VSMTTCSTLLALGMMPLCLFI. Residues 148–157 are Cytoplasmic-facing; the sequence is YTKMWVDSGT. A helical membrane pass occupies residues 158-178; it reads IVIPYDSIGTSLVALVIPVSI. Topologically, residues 179–195 are extracellular; the sequence is GMYVNHKWPQKAKIILK. Residues 196 to 216 traverse the membrane as a helical segment; it reads IGSIAGAILIVLIAVVGGILY. Over 217–224 the chain is Cytoplasmic; that stretch reads QSAWTIEP. Residues 225 to 245 form a helical membrane-spanning segment; the sequence is KLWIIGTIYPIAGYGLGFFLA. Topologically, residues 246–284 are extracellular; it reads RIAGQPWYRCRTVALETGLQNTQLCSTIVQLSFSPEDLN. Residues 285-305 form a helical membrane-spanning segment; that stretch reads LVFTFPLIYSIFQIAFAAILL. Over 306 to 348 the chain is Cytoplasmic; it reads GAYVAYKKCHGKNNTELQEKTDNEMEPRSSFQETNKGFQPDEK. Residues 322-332 are compositionally biased toward basic and acidic residues; sequence LQEKTDNEMEP. The disordered stretch occupies residues 322 to 348; that stretch reads LQEKTDNEMEPRSSFQETNKGFQPDEK. Residue Ser-335 is modified to Phosphoserine.

Belongs to the bile acid:sodium symporter (BASS) (TC 2.A.28) family. Monomer and homodimer. Mainly expressed in ileum and kidney, lower expression in jejunum.

The protein resides in the membrane. The catalysed reaction is taurocholate(out) + 2 Na(+)(out) = taurocholate(in) + 2 Na(+)(in). It catalyses the reaction cholate(out) + 2 Na(+)(out) = cholate(in) + 2 Na(+)(in). The enzyme catalyses taurochenodeoxycholate(out) + 2 Na(+)(out) = taurochenodeoxycholate(in) + 2 Na(+)(in). It carries out the reaction tauroursodeoxycholate(out) + 2 Na(+)(out) = tauroursodeoxycholate(in) + 2 Na(+)(in). The catalysed reaction is glycocholate(out) + 2 Na(+)(out) = glycocholate(in) + 2 Na(+)(in). It catalyses the reaction tauronorcholate(out) + 2 Na(+)(out) = tauronorcholate(in) + 2 Na(+)(in). The enzyme catalyses tauroallocholate(out) + 2 Na(+)(out) = tauroallocholate(in) + 2 Na(+)(in). It carries out the reaction taurodeoxycholate(out) + 2 Na(+)(out) = taurodeoxycholate(in) + 2 Na(+)(in). The catalysed reaction is tauro-beta-muricholate(out) + 2 Na(+)(out) = tauro-beta-muricholate(in) + 2 Na(+)(in). Plays a critical role in the sodium-dependent reabsorption of bile acids from the lumen of the small intestine. Transports various bile acids, unconjugated or conjugated, such as cholate and taurocholate. Also responsible for bile acid transport in the renal proximal tubules, a salvage mechanism that helps conserve bile acids. Works collaboratively with the Na(+)-taurocholate cotransporting polypeptide (NTCP), the organic solute transporter (OST), and the bile salt export pump (BSEP), to ensure efficacious biological recycling of bile acids during enterohepatic circulation. This chain is Ileal sodium/bile acid cotransporter (SLC10A2), found in Cricetulus griseus (Chinese hamster).